The sequence spans 391 residues: Multidrug resistance protein MdtL (391 aa).

Transmembrane regions (helical) follow at residues 4–24 (FLIC…MYLV), 42–62 (IAFS…GKVA), 69–89 (PVAI…SLAE), 93–113 (LFLA…VVAF), 131–151 (LLNG…HLIM), 158–178 (SLFW…LFIL), 203–222 (FFLS…LTFV), 245–265 (ALTA…LGIF), 269–289 (TLMI…AVSP), 293–313 (VSLF…GVAM), 331–351 (LGIA…VVGI), and 356–376 (MLIG…MFVA).

Belongs to the major facilitator superfamily. DHA1 family. MdtL (TC 2.A.1.2.22) subfamily.

The protein localises to the cell inner membrane. Confers resistance to chloramphenicol. In Escherichia coli O45:K1 (strain S88 / ExPEC), this protein is Multidrug resistance protein MdtL.